We begin with the raw amino-acid sequence, 213 residues long: Ripening-related protein 3 (213 aa).

A signal peptide spans 1 to 32 (MAGAMTMSRRRLSHALLLVLAILPNLAALAVA).

The protein belongs to the kiwellin family.

Its subcellular location is the secreted. This Oryza sativa subsp. japonica (Rice) protein is Ripening-related protein 3.